A 359-amino-acid polypeptide reads, in one-letter code: MAFNTDEIKTVVESFETTPYEYEWAPPCEKVRIKELGSWLLPPLYSLVFIIGLLGNMMVVLILIKYRKLQIMTNIYLFNLAISDLLFLFTVPFWIHYVLWNEWGFGHYMCKMLSGFYYLALYSEIFFIILLTIDRYLAIVHAVFALRARTVTFATITSIITWGLAGLAALPEFIFHESQDSFGEFSCSPRYPEGEEDSWKRFHALRMNIFGLALPLLIMVICYSGIIKTLLRCPNKKKHKAIRLIFVVMIVFFIFWTPYNLVLLFSAFHSTFLETSCQQSKHLDLAMQVTEVIAYTHCCINPVIYAFVGERFRKHLRLFFHRNVAVYLGKYIPFLPGEKMERTSSVSPSTGEQEISVVF.

Residues 1–38 (MAFNTDEIKTVVESFETTPYEYEWAPPCEKVRIKELGS) lie on the Extracellular side of the membrane. A helical membrane pass occupies residues 39–64 (WLLPPLYSLVFIIGLLGNMMVVLILI). The Cytoplasmic portion of the chain corresponds to 65 to 68 (KYRK). The helical transmembrane segment at 69–95 (LQIMTNIYLFNLAISDLLFLFTVPFWI) threads the bilayer. Residues 96-111 (HYVLWNEWGFGHYMCK) are Extracellular-facing. Cysteines 110 and 187 form a disulfide. The helical transmembrane segment at 112–133 (MLSGFYYLALYSEIFFIILLTI) threads the bilayer. The Cytoplasmic portion of the chain corresponds to 134–150 (DRYLAIVHAVFALRART). Residues 151 to 175 (VTFATITSIITWGLAGLAALPEFIF) traverse the membrane as a helical segment. Residues 176–201 (HESQDSFGEFSCSPRYPEGEEDSWKR) are Extracellular-facing. Residues 202–227 (FHALRMNIFGLALPLLIMVICYSGII) form a helical membrane-spanning segment. At 228–243 (KTLLRCPNKKKHKAIR) the chain is on the cytoplasmic side. The chain crosses the membrane as a helical span at residues 244-268 (LIFVVMIVFFIFWTPYNLVLLFSAF). The Extracellular portion of the chain corresponds to 269–285 (HSTFLETSCQQSKHLDL). Residues 286–309 (AMQVTEVIAYTHCCINPVIYAFVG) traverse the membrane as a helical segment. The Cytoplasmic portion of the chain corresponds to 310–359 (ERFRKHLRLFFHRNVAVYLGKYIPFLPGEKMERTSSVSPSTGEQEISVVF).

This sequence belongs to the G-protein coupled receptor 1 family. Detected in skeletal muscle and in trace amounts in leukocytes.

Its subcellular location is the cell membrane. In terms of biological role, receptor for C-C type chemokine. Binds and responds to a variety of chemokines, including CCL11, CCL26, CCL7, CCL13, RANTES(CCL5) and CCL15. Subsequently transduces a signal by increasing the intracellular calcium ions level. In addition acts as a possible functional receptor for NARS1. The protein is Probable C-C chemokine receptor type 3 (Ccr3) of Mus musculus (Mouse).